Consider the following 313-residue polypeptide: Potassium channel subfamily K member 6 (313 aa).

At 1-4 (MRRG) the chain is on the cytoplasmic side. A helical transmembrane segment spans residues 5 to 25 (ALLAGALAAYAAYLVLGALLV). N-linked (GlcNAc...) asparagine glycosylation is found at asparagine 79 and asparagine 85. The pore-forming intramembrane region spans 90 to 115 (AWDFASALFFASTLITTVGYGYTTPL). K(+) is bound by residues threonine 106, valine 107, glycine 108, and tyrosine 109. Residues 106 to 111 (TVGYGY) form a selectivity filter 1 region. A helical membrane pass occupies residues 121–141 (AFSIAFALLGVPTTMLLLTAS). The Cytoplasmic portion of the chain corresponds to 142-172 (AQRLSLLLTHVPLSWLSMRWGWDPRRAACWH). Residues 173–193 (LVALLGVVVTVCFLVPAVIFA) form a helical membrane-spanning segment. An intramembrane region (pore-forming) is located at residues 199–223 (WSFLDAFYFCFISLSTIGLGDYVPG). Threonine 214, isoleucine 215, and glycine 216 together coordinate K(+). Residues 214-219 (TIGLGD) form a selectivity filter 2 region. A helical transmembrane segment spans residues 236 to 256 (VLVTVYLFLGLVAMVLVLQTF). The Cytoplasmic portion of the chain corresponds to 257–313 (RHVSDLHGLTELILLPPPCPASFNADEDDRVDILGPQPESHQQLSASSHTDYASIPR). The short motif at 282–290 (DEDDRVDIL) is the Lysosomal targeting signal element. The segment at 288 to 313 (DILGPQPESHQQLSASSHTDYASIPR) is disordered. A compositionally biased stretch (polar residues) spans 295 to 307 (ESHQQLSASSHTD). Residues 308 to 312 (YASIP) carry the Lysosomal targeting signal motif.

The protein belongs to the two pore domain potassium channel (TC 1.A.1.8) family. In terms of assembly, homodimer; disulfide-linked. In terms of processing, N-glycosylation is necessary for targeting to lysosomes. In terms of tissue distribution, widespread expression, detected in all tissues tested except for skeletal muscle. Strongest expression in placenta, pancreas, heart, colon and spleen, lower levels detected in peripheral blood leukocytes, lung, liver, kidney and thymus. Lowest expression detected in brain.

It localises to the late endosome membrane. It is found in the lysosome membrane. The enzyme catalyses K(+)(in) = K(+)(out). Functionally, k(+) channel that conducts outward rectifying currents at the membranes of the endolysosomal system. Active in lysosomes where it regulates lysosome numbers and size. In macrophages, enables K(+) efflux coupled to ATP-induced NLRP3 inflammasome activation upon bacterial infection. Cooperates with ATP-gated P2RX7 channels to activate NLRP3 inflammasome, with P2RX7 conducting Ca(2+) and Na(+) influx that sets the membrane potential for K(+) efflux. In terms of biological role, does not display channel activity. This Homo sapiens (Human) protein is Potassium channel subfamily K member 6.